A 255-amino-acid polypeptide reads, in one-letter code: Hemin import ATP-binding protein HmuV (255 aa).

The 237-residue stretch at 2–238 folds into the ABC transporter domain; that stretch reads LRAHNLHIRR…ESLKAVFGLE (237 aa). ATP is bound at residue 34-41; the sequence is GPNGAGKS.

The protein belongs to the ABC transporter superfamily. Heme (hemin) importer (TC 3.A.1.14.5) family. In terms of assembly, the complex is composed of two ATP-binding proteins (HmuV), two transmembrane proteins (HmuU) and a solute-binding protein (HmuT).

The protein resides in the cell inner membrane. Its function is as follows. Part of the ABC transporter complex HmuTUV involved in hemin import. Responsible for energy coupling to the transport system. In Pseudomonas fluorescens (strain Pf0-1), this protein is Hemin import ATP-binding protein HmuV.